We begin with the raw amino-acid sequence, 93 residues long: UPF0358 protein BPUM_1375 (93 aa).

Belongs to the UPF0358 family.

This Bacillus pumilus (strain SAFR-032) protein is UPF0358 protein BPUM_1375.